A 274-amino-acid polypeptide reads, in one-letter code: Large ribosomal subunit protein uL2c (274 aa).

Disordered stretches follow at residues 1-22 (MAIH…DNQV) and 225-274 (PVDH…RRSK).

Belongs to the universal ribosomal protein uL2 family. In terms of assembly, part of the 50S ribosomal subunit.

It is found in the plastid. The protein resides in the chloroplast. This Silene latifolia (White campion) protein is Large ribosomal subunit protein uL2c (rpl2).